The primary structure comprises 204 residues: Imidazoleglycerol-phosphate dehydratase (204 aa).

The disordered stretch occupies residues 183-204 (DPRMDGITPSTKGTLSESGDSQ). A compositionally biased stretch (polar residues) spans 190–204 (TPSTKGTLSESGDSQ).

The protein belongs to the imidazoleglycerol-phosphate dehydratase family.

Its subcellular location is the cytoplasm. It carries out the reaction D-erythro-1-(imidazol-4-yl)glycerol 3-phosphate = 3-(imidazol-4-yl)-2-oxopropyl phosphate + H2O. It functions in the pathway amino-acid biosynthesis; L-histidine biosynthesis; L-histidine from 5-phospho-alpha-D-ribose 1-diphosphate: step 6/9. The protein is Imidazoleglycerol-phosphate dehydratase of Alcanivorax borkumensis (strain ATCC 700651 / DSM 11573 / NCIMB 13689 / SK2).